The following is a 389-amino-acid chain: Probable serine/threonine-protein kinase PBL24 (389 aa).

The interval 1–36 is disordered; that stretch reads MSCFLGPSTNNKSRENEGSSMAAPYEQQNLPRNDRR. The S-palmitoyl cysteine moiety is linked to residue C3. One can recognise a Protein kinase domain in the interval 71–348; it reads FRQEFLIGEG…SDVVTALSFM (278 aa). ATP is bound by residues 77-85 and K100; that span reads IGEGGFGRV. The Proton acceptor role is filled by D198. Phosphoserine occurs at positions 202 and 232. T238 is modified (phosphothreonine). Y246 carries the phosphotyrosine modification.

This sequence belongs to the protein kinase superfamily. Ser/Thr protein kinase family.

The protein localises to the cell membrane. It carries out the reaction L-seryl-[protein] + ATP = O-phospho-L-seryl-[protein] + ADP + H(+). The catalysed reaction is L-threonyl-[protein] + ATP = O-phospho-L-threonyl-[protein] + ADP + H(+). Its function is as follows. May be involved in plant defense signaling. In Arabidopsis thaliana (Mouse-ear cress), this protein is Probable serine/threonine-protein kinase PBL24.